The chain runs to 164 residues: HTH-type transcriptional regulator IscR (164 aa).

The region spanning 2–131 is the HTH rrf2-type domain; it reads RLTSKGRYAV…NNITLGELVN (130 aa). The segment at residues 28 to 51 is a DNA-binding region (H-T-H motif); the sequence is LADISERQGISLSYLEQLFSRLRK. Residues cysteine 92, cysteine 98, and cysteine 104 each contribute to the [2Fe-2S] cluster site.

Requires [2Fe-2S] cluster as cofactor.

In terms of biological role, regulates the transcription of several operons and genes involved in the biogenesis of Fe-S clusters and Fe-S-containing proteins. This Salmonella agona (strain SL483) protein is HTH-type transcriptional regulator IscR.